The following is a 378-amino-acid chain: Erythronate-4-phosphate dehydrogenase (378 aa).

Residues serine 45 and threonine 66 each contribute to the substrate site. NAD(+)-binding residues include aspartate 146 and threonine 175. Arginine 208 is a catalytic residue. Aspartate 232 contributes to the NAD(+) binding site. Glutamate 237 is an active-site residue. Residue histidine 254 is the Proton donor of the active site. Glycine 257 contacts NAD(+). Position 258 (tyrosine 258) interacts with substrate.

Belongs to the D-isomer specific 2-hydroxyacid dehydrogenase family. PdxB subfamily. Homodimer.

The protein resides in the cytoplasm. It carries out the reaction 4-phospho-D-erythronate + NAD(+) = (R)-3-hydroxy-2-oxo-4-phosphooxybutanoate + NADH + H(+). It functions in the pathway cofactor biosynthesis; pyridoxine 5'-phosphate biosynthesis; pyridoxine 5'-phosphate from D-erythrose 4-phosphate: step 2/5. In terms of biological role, catalyzes the oxidation of erythronate-4-phosphate to 3-hydroxy-2-oxo-4-phosphonooxybutanoate. This chain is Erythronate-4-phosphate dehydrogenase, found in Shigella boydii serotype 4 (strain Sb227).